The chain runs to 534 residues: MKWVEKYAPKKLGDVLGNAKAKAQIEVWANKWSKGVPQKPLLLMGPPGIGKTTIAHLVGKEYFSETIEVNASDKRSYDIIKSSIGEAAQTRSLFHSGYKLLIMDEVDGISGRDDSGGARAVNETIKNSKQPIILMANDAYSKRLTSIKPKCQGIKFTKVHTNSINAQLKRICAREDIEYDSEALYTLSKESNGDLRSAITSLEAIVDNDKKITKDSLSVIAKKDGEQNIFDTVVAVLKSKNPEHVAEAMRVNTQPPFLIELIAENIPREYERTNEIVKAYEMISLADVNLGRAFRTQNYTYWKYAFLFMGRGVAAAKKQTYKKFSRIITPTIYTKLSKSRKNRNLKEQVTQKMSLKLHTSPKELEKQLVFYEELFKDNEQAYDLKQYFKLTDDEVKLFRSRKIPASVEKKRLTKLRKEQELEEKEIQKQKIIDAKKVELKEESKNKKEIKVKTKKDTVEDSSKTKSTTKSKKTSKSTPTKKVTKTKKSSNSTTKNKTESPKNSSKTSSKTSVDDKKTSKKNNKKKSRQTTLFDF.

45-52 (GPPGIGKT) lines the ATP pocket. Over residues 444 to 463 (KNKKEIKVKTKKDTVEDSSK) the composition is skewed to basic and acidic residues. Residues 444-534 (KNKKEIKVKT…KSRQTTLFDF (91 aa)) form a disordered region. The segment covering 488-510 (SSNSTTKNKTESPKNSSKTSSKT) has biased composition (low complexity). Residues 517–527 (TSKKNNKKKSR) show a composition bias toward basic residues.

It belongs to the activator 1 small subunits family. RfcL subfamily. As to quaternary structure, heteromultimer composed of small subunits (RfcS) and large subunits (RfcL).

In terms of biological role, part of the RFC clamp loader complex which loads the PCNA sliding clamp onto DNA. This chain is Replication factor C large subunit, found in Methanosphaera stadtmanae (strain ATCC 43021 / DSM 3091 / JCM 11832 / MCB-3).